The primary structure comprises 336 residues: Holliday junction branch migration complex subunit RuvB (336 aa).

The large ATPase domain (RuvB-L) stretch occupies residues 4 to 184 (ADRLISAGTT…FGIVQRLEFY (181 aa)). Residues Ile-23, Arg-24, Gly-65, Lys-68, Thr-69, Thr-70, 131–133 (EDY), Arg-174, Tyr-184, and Arg-221 contribute to the ATP site. Residue Thr-69 coordinates Mg(2+). Positions 185 to 255 (QVPDLQYIVS…IAAQALDMLN (71 aa)) are small ATPAse domain (RuvB-S). Residues 258–336 (AEGFDYMDRK…HFGITPPEMP (79 aa)) form a head domain (RuvB-H) region. Residues Arg-294, Arg-313, and Arg-318 each coordinate DNA.

This sequence belongs to the RuvB family. In terms of assembly, homohexamer. Forms an RuvA(8)-RuvB(12)-Holliday junction (HJ) complex. HJ DNA is sandwiched between 2 RuvA tetramers; dsDNA enters through RuvA and exits via RuvB. An RuvB hexamer assembles on each DNA strand where it exits the tetramer. Each RuvB hexamer is contacted by two RuvA subunits (via domain III) on 2 adjacent RuvB subunits; this complex drives branch migration. In the full resolvosome a probable DNA-RuvA(4)-RuvB(12)-RuvC(2) complex forms which resolves the HJ.

The protein localises to the cytoplasm. The catalysed reaction is ATP + H2O = ADP + phosphate + H(+). In terms of biological role, the RuvA-RuvB-RuvC complex processes Holliday junction (HJ) DNA during genetic recombination and DNA repair, while the RuvA-RuvB complex plays an important role in the rescue of blocked DNA replication forks via replication fork reversal (RFR). RuvA specifically binds to HJ cruciform DNA, conferring on it an open structure. The RuvB hexamer acts as an ATP-dependent pump, pulling dsDNA into and through the RuvAB complex. RuvB forms 2 homohexamers on either side of HJ DNA bound by 1 or 2 RuvA tetramers; 4 subunits per hexamer contact DNA at a time. Coordinated motions by a converter formed by DNA-disengaged RuvB subunits stimulates ATP hydrolysis and nucleotide exchange. Immobilization of the converter enables RuvB to convert the ATP-contained energy into a lever motion, pulling 2 nucleotides of DNA out of the RuvA tetramer per ATP hydrolyzed, thus driving DNA branch migration. The RuvB motors rotate together with the DNA substrate, which together with the progressing nucleotide cycle form the mechanistic basis for DNA recombination by continuous HJ branch migration. Branch migration allows RuvC to scan DNA until it finds its consensus sequence, where it cleaves and resolves cruciform DNA. The chain is Holliday junction branch migration complex subunit RuvB from Shigella boydii serotype 18 (strain CDC 3083-94 / BS512).